A 747-amino-acid polypeptide reads, in one-letter code: NAD(P)H-quinone oxidoreductase subunit 5, chloroplastic (747 aa).

16 helical membrane-spanning segments follow: residues 8-28 (AWII…ELLL), 39-59 (IWAF…TKLA), 89-109 (IDPL…MVLI), 125-145 (FAYM…PNLI), 147-167 (IHIF…FWFT), 185-205 (GDFG…SFEF), 231-251 (AFLL…HVWL), 259-279 (TPIS…FLVA), 281-301 (LLPL…IGVI), 328-348 (LGYM…FHLI), 355-375 (ALLF…VGYS), 397-417 (TTFF…CFWS), 426-446 (WLYS…TAFY), 550-570 (LFPL…GIHF), 608-628 (FYSV…YGSV), and 726-746 (LFLY…YNFL).

Belongs to the complex I subunit 5 family. In terms of assembly, NDH is composed of at least 16 different subunits, 5 of which are encoded in the nucleus.

It localises to the plastid. Its subcellular location is the chloroplast thylakoid membrane. The enzyme catalyses a plastoquinone + NADH + (n+1) H(+)(in) = a plastoquinol + NAD(+) + n H(+)(out). It carries out the reaction a plastoquinone + NADPH + (n+1) H(+)(in) = a plastoquinol + NADP(+) + n H(+)(out). NDH shuttles electrons from NAD(P)H:plastoquinone, via FMN and iron-sulfur (Fe-S) centers, to quinones in the photosynthetic chain and possibly in a chloroplast respiratory chain. The immediate electron acceptor for the enzyme in this species is believed to be plastoquinone. Couples the redox reaction to proton translocation, and thus conserves the redox energy in a proton gradient. This chain is NAD(P)H-quinone oxidoreductase subunit 5, chloroplastic (ndhF), found in Nymphaea alba (White water-lily).